We begin with the raw amino-acid sequence, 307 residues long: ATP synthase gamma chain (307 aa).

Belongs to the ATPase gamma chain family. F-type ATPases have 2 components, CF(1) - the catalytic core - and CF(0) - the membrane proton channel. CF(1) has five subunits: alpha(3), beta(3), gamma(1), delta(1), epsilon(1). CF(0) has three main subunits: a, b and c.

The protein localises to the cell membrane. Its function is as follows. Produces ATP from ADP in the presence of a proton gradient across the membrane. The gamma chain is believed to be important in regulating ATPase activity and the flow of protons through the CF(0) complex. In Bifidobacterium longum (strain DJO10A), this protein is ATP synthase gamma chain.